The following is a 238-amino-acid chain: Leucine-rich repeat-containing protein 57 (238 aa).

LRR repeat units lie at residues 10–36, 37–62, 64–82, 83–106, 108–128, 129–152, 154–173, and 174–199; these read LETS…LQKL, TANL…SFQH, KSFT…DIGK, LKKL…IGQL, SLRT…GLGT, LRQL…VAEL, AIEI…EVSR, and TPRL…ILTD.

This Danio rerio (Zebrafish) protein is Leucine-rich repeat-containing protein 57 (lrrc57).